The primary structure comprises 84 residues: Exodeoxyribonuclease 7 small subunit (84 aa).

This sequence belongs to the XseB family. In terms of assembly, heterooligomer composed of large and small subunits.

It is found in the cytoplasm. The catalysed reaction is Exonucleolytic cleavage in either 5'- to 3'- or 3'- to 5'-direction to yield nucleoside 5'-phosphates.. In terms of biological role, bidirectionally degrades single-stranded DNA into large acid-insoluble oligonucleotides, which are then degraded further into small acid-soluble oligonucleotides. The sequence is that of Exodeoxyribonuclease 7 small subunit from Bartonella quintana (strain Toulouse) (Rochalimaea quintana).